A 162-amino-acid polypeptide reads, in one-letter code: MEAIKDFFGSLLLTELFKGLRLTGKYFFKRKVTLRYPMEKTPTSARFRGLHALRRYPNGEERCIACKLCEAVCPALAITIESEQRDDGTRRTTRYDIDLTKCIFCGFCEESCPVDSIVETHIHEYHGEKRGDLYFTKDMLLAVGDRYEAEIARRRAEDAPYR.

4Fe-4S ferredoxin-type domains are found at residues 53–83 and 93–122; these read LRRY…IESE and TRYD…ETHI. [4Fe-4S] cluster-binding residues include Cys63, Cys66, Cys69, Cys73, Cys102, Cys105, Cys108, and Cys112.

Belongs to the complex I 23 kDa subunit family. As to quaternary structure, NDH-1 is composed of 14 different subunits. Subunits NuoA, H, J, K, L, M, N constitute the membrane sector of the complex. [4Fe-4S] cluster is required as a cofactor.

It localises to the cell inner membrane. The catalysed reaction is a quinone + NADH + 5 H(+)(in) = a quinol + NAD(+) + 4 H(+)(out). Functionally, NDH-1 shuttles electrons from NADH, via FMN and iron-sulfur (Fe-S) centers, to quinones in the respiratory chain. The immediate electron acceptor for the enzyme in this species is believed to be ubiquinone. Couples the redox reaction to proton translocation (for every two electrons transferred, four hydrogen ions are translocated across the cytoplasmic membrane), and thus conserves the redox energy in a proton gradient. The sequence is that of NADH-quinone oxidoreductase subunit I from Bordetella bronchiseptica (strain ATCC BAA-588 / NCTC 13252 / RB50) (Alcaligenes bronchisepticus).